We begin with the raw amino-acid sequence, 271 residues long: Eukaryotic translation initiation factor 3 subunit G (271 aa).

Disordered regions lie at residues 1 to 26 (MSTTVIGSWADAGDEFSAPDITTNPD), 63 to 119 (AQRK…AQKL), and 147 to 187 (TTSS…RDDS). Residue serine 77 is modified to Phosphoserine. The 80-residue stretch at 188 to 267 (TTLKVSQLNS…LILHLEWSKK (80 aa)) folds into the RRM domain.

It belongs to the eIF-3 subunit G family. Component of the eukaryotic translation initiation factor 3 (eIF-3) complex.

It is found in the cytoplasm. Its function is as follows. RNA-binding component of the eukaryotic translation initiation factor 3 (eIF-3) complex, which is involved in protein synthesis of a specialized repertoire of mRNAs and, together with other initiation factors, stimulates binding of mRNA and methionyl-tRNAi to the 40S ribosome. The eIF-3 complex specifically targets and initiates translation of a subset of mRNAs involved in cell proliferation. This subunit can bind 18S rRNA. The sequence is that of Eukaryotic translation initiation factor 3 subunit G from Scheffersomyces stipitis (strain ATCC 58785 / CBS 6054 / NBRC 10063 / NRRL Y-11545) (Yeast).